The following is a 269-amino-acid chain: MDVDQAAIDEILASAEADTAEGRIDRLEKELDVLKGSVKKLLLDLRETLNNLENPFQNLQNLAEGALAGGASYQPPQIQVVPAQIPEPPKPEPEVEQPETETGPEPEPEAEPELKEVKEDEPPEEDVVRELDESKSAEPIPEVMEEVDLEGDSLQAYSFEKPVKRTTPKTADLITKYDIVTLFNLMEWVKGMLEKYNLDSLTLMLELFESAGYISKDARDFICKIAELVSLNDGFEDMLLELYRLHKLMNPADTSMDSKLLSLILDKRL.

Residues 3 to 66 are a coiled coil; the sequence is VDQAAIDEIL…QNLQNLAEGA (64 aa). The segment at 83–142 is disordered; the sequence is AQIPEPPKPEPEVEQPETETGPEPEPEAEPELKEVKEDEPPEEDVVRELDESKSAEPIPE. Over residues 94–111 the composition is skewed to acidic residues; the sequence is EVEQPETETGPEPEPEAE. The span at 112–136 shows a compositional bias: basic and acidic residues; it reads PELKEVKEDEPPEEDVVRELDESKS.

This is an uncharacterized protein from Archaeoglobus fulgidus (strain ATCC 49558 / DSM 4304 / JCM 9628 / NBRC 100126 / VC-16).